The following is a 107-amino-acid chain: Cytochrome c2 (107 aa).

Gln1 carries the pyrrolidone carboxylic acid modification. Heme c-binding residues include Cys13, Cys16, His17, and Met79.

It belongs to the cytochrome c family. In terms of processing, binds 1 heme c group covalently per subunit.

It localises to the periplasm. Its function is as follows. Cytochrome c2 is found mainly in purple, non-sulfur, photosynthetic bacteria where it functions as the electron donor to the oxidized bacteriochlorophyll in the photophosphorylation pathway. However, it may also have a role in the respiratory chain and is found in some non-photosynthetic bacteria. The polypeptide is Cytochrome c2 (Rhodoplanes tepidamans (Rhodoplanes cryptolactis)).